We begin with the raw amino-acid sequence, 597 residues long: Peptidyl-prolyl cis-trans isomerase-like 2 (597 aa).

Positions 41 to 114 (KKLPFNFCAA…TTDSDENKGD (74 aa)) constitute a U-box domain. The PPIase cyclophilin-type domain maps to 328–483 (NKGYVRMETN…NKIVIKDMII (156 aa)). Residues 495–519 (KKQKEGEEERKREVARQGGTEDDRT) are compositionally biased toward basic and acidic residues. Disordered stretches follow at residues 495–521 (KKQK…RTTW) and 560–597 (ATTT…FDGW).

This sequence belongs to the cyclophilin-type PPIase family. PPIL2 subfamily.

It is found in the nucleus. It carries out the reaction [protein]-peptidylproline (omega=180) = [protein]-peptidylproline (omega=0). It catalyses the reaction S-ubiquitinyl-[E2 ubiquitin-conjugating enzyme]-L-cysteine + [acceptor protein]-L-lysine = [E2 ubiquitin-conjugating enzyme]-L-cysteine + N(6)-ubiquitinyl-[acceptor protein]-L-lysine.. Its pathway is protein modification; protein ubiquitination. Its function is as follows. May catalyze the cis-trans isomerization of proline imidic peptide bonds in oligopeptides thereby assisting the folding of proteins. May also function as a chaperone, playing a role in intracellular transport of proteins. May also have a protein ubiquitin ligase activity acting as an E3 ubiquitin protein ligase or as a ubiquitin-ubiquitin ligase promoting elongation of ubiquitin chains on proteins. The protein is Peptidyl-prolyl cis-trans isomerase-like 2 (ppi-2) of Neurospora crassa (strain ATCC 24698 / 74-OR23-1A / CBS 708.71 / DSM 1257 / FGSC 987).